Here is a 276-residue protein sequence, read N- to C-terminus: MLPERVLEILREMKRERIKGASWLAKKGAEAFLTLAEELDESLLEDAIMELREEVVKVNPSMASLYNLARFIPVTNRRDILKSRALEFLRRMEEAKRELASIGAQLIDDGDVIITHSFSSTVLEIIRTAKERKKRFKVILTESSPDYEGLHLARELEFSGIEFEVITDAQMGLFCREASIAIVGADMITKDGYVVNKAGTYLLALACHENAIPFYVAAETYKFHPTLKSGDVMLMERDLIRGNVRIRNVLFDVTPWKYVRGIITELGIVIPPRDIQ.

The protein belongs to the eIF-2B alpha/beta/delta subunits family. As to quaternary structure, complex of two different subunits.

Its function is as follows. Catalyzes the exchange of initiation factor 2-bound GDP for GTP. The sequence is that of Putative translation initiation factor eIF-2B subunit 2-like from Pyrococcus horikoshii (strain ATCC 700860 / DSM 12428 / JCM 9974 / NBRC 100139 / OT-3).